The chain runs to 243 residues: MYQWIQRDSDVYQRWPWWRRLLIVLLVLALMSVLQVIVFRFVDPPLSMTMVGRYLEAWSDRQWNFRLHYVWCDLEQIAPSVPISLVAAEDQRFPLHHGFDFDAIKKALGHHSRGGHLRGASTISQQVAKNLFLWSGRSFVRKGLEGWYTFWIELFWPKRRILEIYANIAEFGDGVYGVQAAAQRYLEKDAADLDESDAAQLAAVLPSPRRYNIQDPGPYIRWRSSWIQRQAEQLGGSAYLDMH.

A helical transmembrane segment spans residues 22 to 42; the sequence is LIVLLVLALMSVLQVIVFRFV.

Belongs to the glycosyltransferase 51 family.

The protein resides in the cell inner membrane. The enzyme catalyses [GlcNAc-(1-&gt;4)-Mur2Ac(oyl-L-Ala-gamma-D-Glu-L-Lys-D-Ala-D-Ala)](n)-di-trans,octa-cis-undecaprenyl diphosphate + beta-D-GlcNAc-(1-&gt;4)-Mur2Ac(oyl-L-Ala-gamma-D-Glu-L-Lys-D-Ala-D-Ala)-di-trans,octa-cis-undecaprenyl diphosphate = [GlcNAc-(1-&gt;4)-Mur2Ac(oyl-L-Ala-gamma-D-Glu-L-Lys-D-Ala-D-Ala)](n+1)-di-trans,octa-cis-undecaprenyl diphosphate + di-trans,octa-cis-undecaprenyl diphosphate + H(+). The protein operates within cell wall biogenesis; peptidoglycan biosynthesis. Functionally, peptidoglycan polymerase that catalyzes glycan chain elongation from lipid-linked precursors. The sequence is that of Biosynthetic peptidoglycan transglycosylase from Xylella fastidiosa (strain 9a5c).